Consider the following 442-residue polypeptide: UDP-N-acetylmuramate--L-alanine ligase (442 aa).

109 to 115 contacts ATP; it reads GAHGKTS.

Belongs to the MurCDEF family.

The protein localises to the cytoplasm. The catalysed reaction is UDP-N-acetyl-alpha-D-muramate + L-alanine + ATP = UDP-N-acetyl-alpha-D-muramoyl-L-alanine + ADP + phosphate + H(+). It functions in the pathway cell wall biogenesis; peptidoglycan biosynthesis. Cell wall formation. The protein is UDP-N-acetylmuramate--L-alanine ligase of Streptococcus pyogenes serotype M49 (strain NZ131).